Here is a 200-residue protein sequence, read N- to C-terminus: ADP-ribosylation factor-like protein 4D (200 aa).

The N-myristoyl glycine moiety is linked to residue Gly2. GTP-binding positions include 27-34 (GLDSAGKT), 75-79 (DVGGQ), and 134-137 (NKQD).

Belongs to the small GTPase superfamily. Arf family. Interacts with CYTH2; the interaction is direct and ARL4D GTP-dependent. Does not interact with ARL4D.

It localises to the nucleus. Its subcellular location is the nucleolus. The protein localises to the cell membrane. The protein resides in the cytoplasm. In terms of biological role, small GTP-binding protein which cycles between an inactive GDP-bound and an active GTP-bound form, and the rate of cycling is regulated by guanine nucleotide exchange factors (GEF) and GTPase-activating proteins (GAP). GTP-binding protein that does not act as an allosteric activator of the cholera toxin catalytic subunit. Recruits CYTH1, CYTH2, CYTH3 and CYTH4 to the plasma membrane in GDP-bound form. The sequence is that of ADP-ribosylation factor-like protein 4D (ARL4D) from Bos taurus (Bovine).